A 111-amino-acid polypeptide reads, in one-letter code: MSKTDVKKSREASGILTLQVNLRERRNFLNLMQNKLFSWKIRFSAIKGKCSQKSKYFRRSRSEDCYVEADLKILSRTRRSRKLPGTVPDFLGKQLIGISSSVVSRVSRSCR.

This is an uncharacterized protein from Saccharomyces cerevisiae (strain ATCC 204508 / S288c) (Baker's yeast).